A 502-amino-acid polypeptide reads, in one-letter code: Probable mRNA-splicing protein ubp10 (502 aa).

The segment at 56–153 (SQNLYLDTIN…YVMRPTFTKL (98 aa)) adopts a UBP-type; degenerate zinc-finger fold. Zn(2+) is bound by residues Cys89, Cys92, His108, and His114. One can recognise a USP domain in the interval 178–501 (VGMNNIKNND…ESFIQLWERS (324 aa)).

This sequence belongs to the peptidase C19 family.

It localises to the nucleus. May play a role in mRNA splicing. It is unsure if the protein really exhibits hydrolase activity. Could be a competitor of ubiquitin C-terminal hydrolases (UCHs). The protein is Probable mRNA-splicing protein ubp10 (ubp10) of Schizosaccharomyces pombe (strain 972 / ATCC 24843) (Fission yeast).